The sequence spans 123 residues: Small ribosomal subunit protein uS12 (123 aa).

Belongs to the universal ribosomal protein uS12 family. Part of the 30S ribosomal subunit. Contacts proteins S8 and S17. May interact with IF1 in the 30S initiation complex.

In terms of biological role, with S4 and S5 plays an important role in translational accuracy. Functionally, interacts with and stabilizes bases of the 16S rRNA that are involved in tRNA selection in the A site and with the mRNA backbone. Located at the interface of the 30S and 50S subunits, it traverses the body of the 30S subunit contacting proteins on the other side and probably holding the rRNA structure together. The combined cluster of proteins S8, S12 and S17 appears to hold together the shoulder and platform of the 30S subunit. This Corynebacterium diphtheriae (strain ATCC 700971 / NCTC 13129 / Biotype gravis) protein is Small ribosomal subunit protein uS12.